Here is a 276-residue protein sequence, read N- to C-terminus: Pantothenate synthetase (276 aa).

27–34 (MGALHRGH) is an ATP binding site. The active-site Proton donor is His34. Residue Gln58 coordinates (R)-pantoate. Gln58 lines the beta-alanine pocket. 147–150 (GKKD) is a binding site for ATP. A (R)-pantoate-binding site is contributed by Gln153. ATP contacts are provided by residues Val176 and 184–187 (LSSR).

Belongs to the pantothenate synthetase family. Homodimer.

It is found in the cytoplasm. The catalysed reaction is (R)-pantoate + beta-alanine + ATP = (R)-pantothenate + AMP + diphosphate + H(+). It participates in cofactor biosynthesis; (R)-pantothenate biosynthesis; (R)-pantothenate from (R)-pantoate and beta-alanine: step 1/1. Functionally, catalyzes the condensation of pantoate with beta-alanine in an ATP-dependent reaction via a pantoyl-adenylate intermediate. The chain is Pantothenate synthetase from Helicobacter pylori (strain J99 / ATCC 700824) (Campylobacter pylori J99).